The following is a 307-amino-acid chain: Myeloid-associated differentiation marker-like protein 2 (307 aa).

MARVEL domains lie at 17–154 and 159–303; these read AVTS…ARPG and YMAT…RIRF. Transmembrane regions (helical) follow at residues 53–73, 90–110, 129–149, 163–183, 198–218, 232–252, and 278–298; these read FCVA…ACEF, AFAM…PLYF, LAAS…VALT, VSGL…GALV, VAVY…SVLG, VVYT…WPVF, and LVVA…LAYS.

This sequence belongs to the MAL family.

It localises to the membrane. The sequence is that of Myeloid-associated differentiation marker-like protein 2 (MYADML2) from Bos taurus (Bovine).